We begin with the raw amino-acid sequence, 232 residues long: Octanoyltransferase (232 aa).

In terms of domain architecture, BPL/LPL catalytic spans 33-216 (GRAQDTVILL…HLVRALSNGS (184 aa)). Residues 71-78 (RGGRITWH), 146-148 (AIG), and 159-161 (GFA) contribute to the substrate site. C177 serves as the catalytic Acyl-thioester intermediate.

This sequence belongs to the LipB family.

The protein resides in the cytoplasm. It catalyses the reaction octanoyl-[ACP] + L-lysyl-[protein] = N(6)-octanoyl-L-lysyl-[protein] + holo-[ACP] + H(+). It functions in the pathway protein modification; protein lipoylation via endogenous pathway; protein N(6)-(lipoyl)lysine from octanoyl-[acyl-carrier-protein]: step 1/2. Its function is as follows. Catalyzes the transfer of endogenously produced octanoic acid from octanoyl-acyl-carrier-protein onto the lipoyl domains of lipoate-dependent enzymes. Lipoyl-ACP can also act as a substrate although octanoyl-ACP is likely to be the physiological substrate. The protein is Octanoyltransferase of Clavibacter sepedonicus (Clavibacter michiganensis subsp. sepedonicus).